A 214-amino-acid chain; its full sequence is Nodulation protein A (214 aa).

This sequence belongs to the NodA family.

Its subcellular location is the cytoplasm. In terms of biological role, N-acyltransferase required for nodulation. Acts in the production of a small, heat-stable compound (Nod) that stimulates mitosis in various plant protoplasts. This is Nodulation protein A from Methylobacterium nodulans (strain LMG 21967 / CNCM I-2342 / ORS 2060).